The primary structure comprises 483 residues: Cobyric acid synthase (483 aa).

The GATase cobBQ-type domain occupies 244-430 (WLRVIAPVLP…LHGLFDHAEA (187 aa)). Residue Cys-325 is the Nucleophile of the active site. The active site involves His-422.

Belongs to the CobB/CobQ family. CobQ subfamily.

It participates in cofactor biosynthesis; adenosylcobalamin biosynthesis. Functionally, catalyzes amidations at positions B, D, E, and G on adenosylcobyrinic A,C-diamide. NH(2) groups are provided by glutamine, and one molecule of ATP is hydrogenolyzed for each amidation. In Methylobacillus flagellatus (strain ATCC 51484 / DSM 6875 / VKM B-1610 / KT), this protein is Cobyric acid synthase.